A 94-amino-acid chain; its full sequence is Small ribosomal subunit protein uS19 (94 aa).

It belongs to the universal ribosomal protein uS19 family.

Functionally, protein S19 forms a complex with S13 that binds strongly to the 16S ribosomal RNA. The chain is Small ribosomal subunit protein uS19 from Wolbachia sp. subsp. Brugia malayi (strain TRS).